We begin with the raw amino-acid sequence, 92 residues long: Small ribosomal subunit protein uS19c (92 aa).

This sequence belongs to the universal ribosomal protein uS19 family.

It is found in the plastid. Its subcellular location is the chloroplast. Its function is as follows. Protein S19 forms a complex with S13 that binds strongly to the 16S ribosomal RNA. The polypeptide is Small ribosomal subunit protein uS19c (rps19) (Porphyra purpurea (Red seaweed)).